Here is an 82-residue protein sequence, read N- to C-terminus: Large ribosomal subunit protein bL31B (82 aa).

Belongs to the bacterial ribosomal protein bL31 family. Type B subfamily. Part of the 50S ribosomal subunit.

The chain is Large ribosomal subunit protein bL31B from Pectobacterium atrosepticum (strain SCRI 1043 / ATCC BAA-672) (Erwinia carotovora subsp. atroseptica).